The primary structure comprises 1070 residues: DNA-directed RNA polymerase subunit beta (1070 aa).

It belongs to the RNA polymerase beta chain family. As to quaternary structure, in plastids the minimal PEP RNA polymerase catalytic core is composed of four subunits: alpha, beta, beta', and beta''. When a (nuclear-encoded) sigma factor is associated with the core the holoenzyme is formed, which can initiate transcription.

It is found in the plastid. It localises to the chloroplast. It carries out the reaction RNA(n) + a ribonucleoside 5'-triphosphate = RNA(n+1) + diphosphate. In terms of biological role, DNA-dependent RNA polymerase catalyzes the transcription of DNA into RNA using the four ribonucleoside triphosphates as substrates. This Citrus sinensis (Sweet orange) protein is DNA-directed RNA polymerase subunit beta.